The chain runs to 135 residues: Putative pre-16S rRNA nuclease (135 aa).

This sequence belongs to the YqgF nuclease family.

The protein localises to the cytoplasm. Its function is as follows. Could be a nuclease involved in processing of the 5'-end of pre-16S rRNA. The sequence is that of Putative pre-16S rRNA nuclease from Clostridium novyi (strain NT).